The primary structure comprises 326 residues: MSNISVIGTGSYVPNNIITNDFLSTIVDTSDEWIRTRTGILERRISKGENTIYMATESAKEAIKNANIEANDLDLIIVATLTPDNFMPSTACSVQKEIGAINALCFDISAACSGFIYGLEIACSMLKNSFRNKALIIGAENLSKIVDWEDRNTCVLFGDGAGAAILSKTKEEGILEFHSGSNGLKGEHLTCGVLKANNTPNKNDRLEKNNFIKMNGKEIFRFAVGAMNETICNIQEKTKWNLNEVKYIISHQANSRIIEYTAKKLNTEKDKFYMNLDKYGNTSAASIPIALDEMNKRGLLNKKDKIILVGFGGGLTFGGVAIVWSI.

Active-site residues include Cys112 and His251. The ACP-binding stretch occupies residues 252–256 (QANSR). The active site involves Asn281.

Belongs to the thiolase-like superfamily. FabH family. As to quaternary structure, homodimer.

The protein localises to the cytoplasm. The catalysed reaction is malonyl-[ACP] + acetyl-CoA + H(+) = 3-oxobutanoyl-[ACP] + CO2 + CoA. The protein operates within lipid metabolism; fatty acid biosynthesis. In terms of biological role, catalyzes the condensation reaction of fatty acid synthesis by the addition to an acyl acceptor of two carbons from malonyl-ACP. Catalyzes the first condensation reaction which initiates fatty acid synthesis and may therefore play a role in governing the total rate of fatty acid production. Possesses both acetoacetyl-ACP synthase and acetyl transacylase activities. Its substrate specificity determines the biosynthesis of branched-chain and/or straight-chain of fatty acids. The polypeptide is Beta-ketoacyl-[acyl-carrier-protein] synthase III (Clostridium botulinum (strain Kyoto / Type A2)).